The primary structure comprises 153 residues: Transcriptional regulator MraZ (153 aa).

2 SpoVT-AbrB domains span residues 7–61 (KEKH…LPDV) and 90–133 (LEMV…EPGR).

This sequence belongs to the MraZ family. As to quaternary structure, forms oligomers.

It localises to the cytoplasm. It is found in the nucleoid. In Chlorobium luteolum (strain DSM 273 / BCRC 81028 / 2530) (Pelodictyon luteolum), this protein is Transcriptional regulator MraZ.